Here is a 909-residue protein sequence, read N- to C-terminus: Phosphoenolpyruvate carboxylase (909 aa).

Catalysis depends on residues His-151 and Lys-578.

The protein belongs to the PEPCase type 1 family. The cofactor is Mg(2+).

It catalyses the reaction oxaloacetate + phosphate = phosphoenolpyruvate + hydrogencarbonate. Functionally, forms oxaloacetate, a four-carbon dicarboxylic acid source for the tricarboxylic acid cycle. This is Phosphoenolpyruvate carboxylase from Caulobacter vibrioides (strain ATCC 19089 / CIP 103742 / CB 15) (Caulobacter crescentus).